The sequence spans 246 residues: tRNA1(Val) (adenine(37)-N6)-methyltransferase (246 aa).

The protein belongs to the methyltransferase superfamily. tRNA (adenine-N(6)-)-methyltransferase family.

The protein resides in the cytoplasm. It catalyses the reaction adenosine(37) in tRNA1(Val) + S-adenosyl-L-methionine = N(6)-methyladenosine(37) in tRNA1(Val) + S-adenosyl-L-homocysteine + H(+). In terms of biological role, specifically methylates the adenine in position 37 of tRNA(1)(Val) (anticodon cmo5UAC). This chain is tRNA1(Val) (adenine(37)-N6)-methyltransferase, found in Shewanella halifaxensis (strain HAW-EB4).